The following is a 1151-amino-acid chain: Calcium-activated potassium channel subunit alpha-1 (1151 aa).

The segment at 1-36 (MSSNIHANHLSLDASSSSSSSSSSSSSSSSSSSVHE) is disordered. Topologically, residues 1-59 (MSSNIHANHLSLDASSSSSSSSSSSSSSSSSSSVHEPKMDALIIPVTMEVPCDSRGQRM) are extracellular. Residues 15 to 33 (SSSSSSSSSSSSSSSSSSS) show a composition bias toward low complexity. Residues 60–80 (WWAFLASSMVTFFGGLFIILL) form a helical membrane-spanning segment. Residues 81–151 (WRTLKYLWTV…MISAQTLTGR (71 aa)) are Cytoplasmic-facing. 3 S-palmitoyl cysteine lipidation sites follow: C91, C92, and C94. A helical membrane pass occupies residues 152–172 (VLVVLVFALSIGALVIYFIDS). The Extracellular portion of the chain corresponds to 173–187 (SNPIESCQNFYKDFT). Residues 188-208 (LQIDMAFNVFFLLYFGLRFIA) traverse the membrane as a helical segment. Topologically, residues 209–212 (ANDK) are cytoplasmic. Residues 213 to 233 (LWFWLEVNSVVDFFTVPPVFV) form a helical membrane-spanning segment. At 234-237 (SVYL) the chain is on the extracellular side. Residues 238-258 (NRSWLGLRFLRALRLIQFSEI) traverse the membrane as a helical; Voltage-sensor segment. Residues 259–273 (LQFLNILKTSNSIKL) lie on the Cytoplasmic side of the membrane. A helical membrane pass occupies residues 274–294 (VNLLSIFISTWLTAAGFIHLV). Residues 295-308 (ENSGDPWENFQNNQ) lie on the Extracellular side of the membrane. Residues 309 to 331 (ALTYWECVYLLMVTMSTVGYGDV) constitute an intramembrane region (pore-forming). A Selectivity for potassium motif is present at residues 325–328 (TVGY). The Extracellular segment spans residues 332–340 (YAKTTLGRL). The helical transmembrane segment at 341-361 (FMVFFILGGLAMFASYVPEII) threads the bilayer. Topologically, residues 362 to 1151 (ELIGNRKKYG…KQKYVQEERL (790 aa)) are cytoplasmic. Residues 380–522 (RKHIVVCGHI…WNWKEGDDAI (143 aa)) form the RCK N-terminal 1 domain. Mg(2+) contacts are provided by E412, Q435, and E437. The segment at 529–549 (LGFIAQSCLAQGLSTMLANLF) is segment S7. Positions 586–606 (LSFPTVCELCFVKLKLLMIAI) are segment S8. Positions 650–654 (CKACH) are heme-binding motif. Residues 674–702 (EQPSTLSPKKKQRNGGMRNSPNSSPKLMR) are disordered. At T678 the chain carries Phosphothreonine. Residues S680, S693, and S697 each carry the phosphoserine modification. The interval 752 to 772 (VLSGHVVVCIFGDVSSALIGL) is segment S9. The RCK N-terminal 2 domain occupies 754–898 (SGHVVVCIFG…MDRSSPDNSP (145 aa)). The residue at position 885 (T885) is a Phosphothreonine. Phosphoserine occurs at positions 893 and 897. Positions 918–940 (TELVNDTNVQFLDQDDDDDPDTE) match the Calcium bowl motif. Ca(2+) is bound by residues Q927, D930, D933, and D935. The interval 947-967 (FACGTAFAVSVLDSLMSATYF) is segment S10. Positions 1101–1126 (RASLSHSSHSSQSSSKKSSSVHSIPS) are enriched in low complexity. The segment at 1101–1151 (RASLSHSSHSSQSSSKKSSSVHSIPSTANRQNRPKSRESRDKQKYVQEERL) is disordered. A compositionally biased stretch (basic and acidic residues) spans 1135–1151 (KSRESRDKQKYVQEERL). Phosphoserine occurs at positions 1136 and 1139.

The protein belongs to the potassium channel family. Calcium-activated (TC 1.A.1.3) subfamily. KCa1.1/KCNMA1 sub-subfamily. As to quaternary structure, homotetramer; which constitutes the calcium-activated potassium channel. Interacts with beta subunits KCNMB1, KCNMB2, KCNMB3 and KCNMB4. Interacts with gamma subunits LRRC26, LRRC38, LRRC52 and LRRC55. Beta and gamma subunits are accessory, and modulate its activity. Interacts with RAB11B. Post-translationally, phosphorylated. Phosphorylation by kinases such as PKA and/or PKG. In smooth muscles, phosphorylation affects its activity. In terms of processing, palmitoylation by ZDHHC22 and ZDHHC23 within the intracellular linker between the S0 and S1 transmembrane domains regulates localization to the plasma membrane. Depalmitoylated by LYPLA1 and LYPLAL1, leading to retard exit from the trans-Golgi network.

It localises to the cell membrane. The catalysed reaction is K(+)(in) = K(+)(out). With respect to regulation, ethanol and carbon monoxide-bound heme increase channel activation. Heme inhibits channel activation. In terms of biological role, potassium channel activated by both membrane depolarization or increase in cytosolic Ca(2+) that mediates export of K(+). It is also activated by the concentration of cytosolic Mg(2+). Its activation dampens the excitatory events that elevate the cytosolic Ca(2+) concentration and/or depolarize the cell membrane. It therefore contributes to repolarization of the membrane potential. Plays a key role in controlling excitability in a number of systems, such as regulation of the contraction of smooth muscle, the tuning of hair cells in the cochlea, regulation of transmitter release, and innate immunity. In smooth muscles, its activation by high level of Ca(2+), caused by ryanodine receptors in the sarcoplasmic reticulum, regulates the membrane potential. In cochlea cells, its number and kinetic properties partly determine the characteristic frequency of each hair cell and thereby helps to establish a tonotopic map. Kinetics of KCNMA1 channels are determined by alternative splicing, phosphorylation status and its combination with modulating beta subunits. Highly sensitive to both iberiotoxin (IbTx) and charybdotoxin (CTX). The sequence is that of Calcium-activated potassium channel subunit alpha-1 (KCNMA1) from Macaca mulatta (Rhesus macaque).